Consider the following 524-residue polypeptide: Glucose-6-phosphate isomerase (524 aa).

Residue Glu-322 is the Proton donor of the active site. Catalysis depends on residues His-351 and Lys-453.

It belongs to the GPI family.

It is found in the cytoplasm. It catalyses the reaction alpha-D-glucose 6-phosphate = beta-D-fructose 6-phosphate. It participates in carbohydrate biosynthesis; gluconeogenesis. It functions in the pathway carbohydrate degradation; glycolysis; D-glyceraldehyde 3-phosphate and glycerone phosphate from D-glucose: step 2/4. In terms of biological role, catalyzes the reversible isomerization of glucose-6-phosphate to fructose-6-phosphate. This is Glucose-6-phosphate isomerase from Prochlorococcus marinus (strain NATL2A).